Here is a 94-residue protein sequence, read N- to C-terminus: Probable FAD-linked sulfhydryl oxidase FPV093 (94 aa).

The 94-residue stretch at Met-1–Ile-94 folds into the ERV/ALR sulfhydryl oxidase domain. A disulfide bridge links Cys-41 with Cys-44.

It belongs to the poxviruses E10 family. The cofactor is FAD.

The enzyme catalyses 2 R'C(R)SH + O2 = R'C(R)S-S(R)CR' + H2O2. In terms of biological role, FAD-dependent sulfhydryl oxidase that catalyzes disulfide bond formation. In Fowlpox virus (strain NVSL) (FPV), this protein is Probable FAD-linked sulfhydryl oxidase FPV093.